The sequence spans 685 residues: Stromal interaction molecule 1 (685 aa).

Residues 1–22 (MDVCVRLALWLLWGLLLHQGQS) form the signal peptide. Over 23 to 213 (LSHSHSEKAT…LLTRHNHLKD (191 aa)) the chain is Extracellular. 2 consecutive EF-hand domains span residues 64-97 (SFEA…EDLN) and 102-126 (TVKH…AWKS). The Ca(2+) site is built by Asp76, Asp78, Asn80, Asp82, and Glu87. Residues Asn131 and Asn171 are each glycosylated (N-linked (GlcNAc...) asparagine). Residues 132–200 (WTVDEVVQWL…QLKALDTVLF (69 aa)) form the SAM domain. A helical transmembrane segment spans residues 214-234 (FMLVVSIVIGVGGCWFAYIQN). The Cytoplasmic portion of the chain corresponds to 235 to 685 (RYSKEHMKKM…LKIFKKPLKK (451 aa)). A coiled-coil region spans residues 248–442 (LEGLHRAEQS…IEILCGFQIV (195 aa)). Position 257 is a phosphoserine (Ser257). The segment at 344–442 (PEALQKWLQL…IEILCGFQIV (99 aa)) is SOAR/CAD. Positions 475-483 (DDVDDMDEE) are contributes to fast Ca(2+)-dependent inactivation of CRAC channels. Low complexity predominate over residues 490–499 (MQSPSLQSSV). The disordered stretch occupies residues 490 to 542 (MQSPSLQSSVRQRLTEPQHGLGSQRDLTHSDSESSLHMSDRQRVAPKPPQMSR). Residue Thr504 is modified to Phosphothreonine. Ser512 carries the post-translational modification Phosphoserine. A compositionally biased stretch (basic and acidic residues) spans 515–532 (DLTHSDSESSLHMSDRQR). Thr517 carries the post-translational modification Phosphothreonine. Residues Ser519, Ser521, Ser523, Ser524, Ser567, Ser575, Ser602, Ser608, Ser618, Ser621, and Ser628 each carry the phosphoserine modification. The disordered stretch occupies residues 596–685 (LMELSPSAPP…LKIFKKPLKK (90 aa)). Residues 608-620 (SPHLDSSRSHSPS) are compositionally biased toward low complexity. The Microtubule tip localization signal motif lies at 642–645 (TRIP). Residues 655–666 (EEDNGSIGEETD) are compositionally biased toward acidic residues. Ser660 carries the phosphoserine modification. Thr665 is modified (phosphothreonine). Ser668 bears the Phosphoserine mark. Residues 670-685 (GRKKFPLKIFKKPLKK) show a composition bias toward basic residues. Residues 672-685 (KKFPLKIFKKPLKK) are required for generation of inwardly rectifying CRAC currents.

In terms of assembly, monomer in the presence of Ca(2+); it oligomerizes in absence of Ca(2+). Forms homooligomers and heterooligomers with STIM2. Interacts with pore-forming subunits of CRAC channels, ORAI1, ORAI2 and ORAI3; this interaction is potentiated upon Ca(2+) store depletion. Interacts (via the transmembrane region and the SOAR/CAD domain) with SPPL3; the interaction promotes the binding of STIM1 to ORAI1. Interacts (via the SOAR/CAD domain) with ORAI1. Interacts with MAPRE1; probably required for targeting to the growing microtubule plus ends. Interacts with CRACR2A/EFCAB4B; the interaction is direct and takes place in absence of Ca(2+). Forms a complex with CRACR2A/EFCAB4B and ORAI1 at low concentration of Ca(2+), the complex dissociates at elevated Ca(2+) concentrations. Interacts with SARAF, promoting a slow inactivation of STIM1-dependent SOCE activity, possibly by facilitating the deoligomerization of STIM1. Interacts with EFHB; the interaction takes place upon Ca(2+)-store depletion and inhibits the association with SARAF. Interacts with ASPH (isoform 8). Interacts with SLC35G1; intracellular Ca(2+)-dependent. May interact with ATP1A1, ATP2A2, ATP2B1, ATP2B4, KPNB1 and XPO1; through SLC35G1. Interacts with TMEM203. Interacts with STIMATE, promoting STIM1 conformational switch. Interacts with TMEM178A. Interacts with CASQ1 (via C-terminal end and preferentially with the monomeric form); this interaction increases in response to a depletion of intracellular Ca(2+), decreases both STIM1 aggregation and clustering, interaction of STIM1 with ORAI1 and store-operated Ca(2+) entry (SOCE) activity. Interacts with ADCY8. Post-translationally, glycosylation is required for cell surface expression. Phosphorylated predominantly on Ser residues. In terms of tissue distribution, ubiquitously expressed in various human primary cells and tumor cell lines.

The protein resides in the cell membrane. It localises to the endoplasmic reticulum membrane. It is found in the cytoplasm. Its subcellular location is the cytoskeleton. The protein localises to the sarcoplasmic reticulum. Its function is as follows. Acts as a Ca(2+) sensor that gates two major inward rectifying Ca(2+) channels at the plasma membrane: Ca(2+) release-activated Ca(2+) (CRAC) channels and arachidonate-regulated Ca(2+)-selective (ARC) channels. Plays a role in mediating store-operated Ca(2+) entry (SOCE), a Ca(2+) influx following depletion of intracellular Ca(2+) stores. Upon Ca(2+) depletion, translocates from the endoplasmic reticulum to the plasma membrane where it activates CRAC channel pore-forming subunits ORA1, ORA2 and ORAI3 to generate sustained and oscillatory Ca(2+) entry. Involved in enamel formation. The sequence is that of Stromal interaction molecule 1 (STIM1) from Homo sapiens (Human).